The following is a 325-amino-acid chain: Odorant receptor 131-2 (325 aa).

The Extracellular segment spans residues 1–22; sequence MNSTSNSSLGNTFISKTLKEKS. Residues asparagine 2 and asparagine 6 are each glycosylated (N-linked (GlcNAc...) asparagine). A helical transmembrane segment spans residues 23–43; sequence LTVQVLVGILLYVNGLMIFTF. Topologically, residues 44–54 are cytoplasmic; it reads LKKETFRDTRY. Residues 55–75 traverse the membrane as a helical segment; the sequence is ILFAQTLFVDSALMLFADLTL. Topologically, residues 76–91 are extracellular; sequence VGSAYELFIHIISCYI. Cysteine 89 and cysteine 170 are oxidised to a cystine. Residues 92–112 form a helical membrane-spanning segment; the sequence is FCTVMALLSICSPVTLVAMCL. Topologically, residues 113 to 135 are cytoplasmic; the sequence is ERYVAICLPLRHASISSPKNTIN. Residues 136 to 156 traverse the membrane as a helical segment; it reads GLLIIWGVSSVIPLFIFIVSF. The Extracellular segment spans residues 157–190; it reads TYTPPNAMNSYVVCSNDVMFQVKWLAEMRALSQQ. A helical transmembrane segment spans residues 191 to 211; it reads LLFVIMLCIVGSTYIKIMVAA. At 212-227 the chain is on the cytoplasmic side; it reads KSASAENKKSTYKGLR. The helical transmembrane segment at 228-248 threads the bilayer; that stretch reads TVILHGLQLILGMMQLITPYI. Over 249–267 the chain is Extracellular; it reads DILTLKVDIMLFINVKFSN. A helical transmembrane segment spans residues 268–285; that stretch reads FMLFWIFPRCLSPLVYGL. Topologically, residues 286-325 are cytoplasmic; the sequence is RDKKFYNALKYYAFCGIYVCKKHKIKDSKTIRGAVSIAIY.

This sequence belongs to the G-protein coupled receptor 1 family. Homodimer. Monomer.

Its subcellular location is the cell membrane. It localises to the cytoplasm. Its function is as follows. Probable olfactory receptor. The chain is Odorant receptor 131-2 from Danio rerio (Zebrafish).